The chain runs to 546 residues: Germacrene-D synthase (546 aa).

Mg(2+) is bound by residues Asp-303, Asp-307, Asp-448, and Glu-456. Residues 303-307 carry the DDXXD motif motif; the sequence is DDIYD.

Belongs to the terpene synthase family. The cofactor is Mg(2+). Mn(2+) serves as cofactor.

The enzyme catalyses (2E,6E)-farnesyl diphosphate = (-)-germacrene D + diphosphate. The protein operates within secondary metabolite biosynthesis; terpenoid biosynthesis. Functionally, sesquiterpene synthase that catalyzes the formation of germacrene D from trans,trans-farnesyl diphosphate (FPP). This Ocimum basilicum (Sweet basil) protein is Germacrene-D synthase (GDS).